A 294-amino-acid polypeptide reads, in one-letter code: Nucleoside-specific channel-forming protein Tsx (294 aa).

Positions 1-22 (MKKTLLAAGAVVALSTTFAAGA) are cleaved as a signal peptide.

Belongs to the nucleoside-specific channel-forming outer membrane porin (Tsx) (TC 1.B.10) family.

It is found in the cell outer membrane. In terms of biological role, functions as a substrate-specific channel for nucleosides and deoxynucleosides. Also functions in albicidin uptake and as receptor for colicin K. Also is a receptor for several Tsx-specific bacteriophages. This is Nucleoside-specific channel-forming protein Tsx from Klebsiella pneumoniae.